We begin with the raw amino-acid sequence, 152 residues long: Sulfur-rich protein (152 aa).

The segment at Met-1–Ser-20 is disordered. 2 helical membrane-spanning segments follow: residues Val-43–Ala-63 and Ala-69–Leu-89.

The protein resides in the membrane. The chain is Sulfur-rich protein (srp) from Chlamydia trachomatis serovar A (strain ATCC VR-571B / DSM 19440 / HAR-13).